The primary structure comprises 209 residues: MKTGESTAIDIAPETNNSGPIGKKKSTTPLLAAPVPDRGTHRMKRGLAIFDFVLRIGVLASALAAAAAMGTSEQTLPFFTQFFQFEASYDDLPTFQFFVVAMAVVAGYVVLSIPFSIVCIIRPHAAGPRVLLLILDSVALTLNTAAAGAAAAVVSLAHSGNSSTNWLAICNQFGDFCQQASGAVVGSFAAVLLFLLLILFSALSLKNSH.

The interval 1–35 (MKTGESTAIDIAPETNNSGPIGKKKSTTPLLAAPV) is disordered. Topologically, residues 1 to 46 (MKTGESTAIDIAPETNNSGPIGKKKSTTPLLAAPVPDRGTHRMKRG) are cytoplasmic. The helical transmembrane segment at 47-67 (LAIFDFVLRIGVLASALAAAA) threads the bilayer. Residues 68-96 (AMGTSEQTLPFFTQFFQFEASYDDLPTFQ) lie on the Extracellular side of the membrane. A helical transmembrane segment spans residues 97-117 (FFVVAMAVVAGYVVLSIPFSI). Over 118–129 (VCIIRPHAAGPR) the chain is Cytoplasmic. The helical transmembrane segment at 130 to 150 (VLLLILDSVALTLNTAAAGAA) threads the bilayer. Residues 151-182 (AAVVSLAHSGNSSTNWLAICNQFGDFCQQASG) are Extracellular-facing. N-linked (GlcNAc...) asparagine glycosylation occurs at asparagine 161. A helical membrane pass occupies residues 183–203 (AVVGSFAAVLLFLLLILFSAL). The Cytoplasmic portion of the chain corresponds to 204–209 (SLKNSH).

This sequence belongs to the Casparian strip membrane proteins (CASP) family. In terms of assembly, homodimer and heterodimers.

It is found in the cell membrane. Its function is as follows. Regulates membrane-cell wall junctions and localized cell wall deposition. Required for establishment of the Casparian strip membrane domain (CSD) and the subsequent formation of Casparian strips, a cell wall modification of the root endodermis that determines an apoplastic barrier between the intraorganismal apoplasm and the extraorganismal apoplasm and prevents lateral diffusion. The chain is Casparian strip membrane protein 1 from Cucumis melo (Muskmelon).